The chain runs to 337 residues: Outer membrane protein U (337 aa).

Positions 1–21 are cleaved as a signal peptide; the sequence is MKKTLIALSVSAAAMATGVNA.

Belongs to the Gram-negative porin family. Homotrimer.

The protein localises to the cell outer membrane. In terms of biological role, forms pores that allow passive diffusion of small molecules across the outer membrane. The protein is Outer membrane protein U (ompU) of Vibrio parahaemolyticus serotype O3:K6 (strain RIMD 2210633).